The following is a 159-amino-acid chain: Transcriptional repressor NrdR (159 aa).

Residues 3 to 34 fold into a zinc finger; sequence CPFCHTPDTSVIDSRVSEEGDRIRRRRRCPHC. One can recognise an ATP-cone domain in the interval 49 to 139; sequence PQVVKQDGNR…VYRSFQGAAD (91 aa).

This sequence belongs to the NrdR family. Zn(2+) serves as cofactor.

Functionally, negatively regulates transcription of bacterial ribonucleotide reductase nrd genes and operons by binding to NrdR-boxes. In Nitrosospira multiformis (strain ATCC 25196 / NCIMB 11849 / C 71), this protein is Transcriptional repressor NrdR.